Reading from the N-terminus, the 621-residue chain is Microbial serine proteinase (621 aa).

The signal sequence occupies residues 1–24; that stretch reads MRKTSLALAISALLSALPIASVQA. Residues 68–440 enclose the Peptidase S8 domain; it reads PRGGMAGNDL…FGLVDVNKTQ (373 aa). Catalysis depends on aspartate 98, which acts as the Charge relay system. The disordered stretch occupies residues 114-133; that stretch reads PGSKNVVTGGSDPTPTDPDR. Residues histidine 137 and serine 354 each act as charge relay system in the active site. In terms of domain architecture, P/Homo B spans 454–619; it reads AVALAKGKGN…GYSVLGHDAA (166 aa). The tract at residues 457–485 is disordered; sequence LAKGKGNGRSPSAPSRYVGSSPTRSSTQV. Over residues 465 to 485 the composition is skewed to polar residues; sequence RSPSAPSRYVGSSPTRSSTQV.

It belongs to the peptidase S8 family.

Functionally, agent of furonculosis. The protein is Microbial serine proteinase (aspA) of Aeromonas salmonicida.